Here is a 399-residue protein sequence, read N- to C-terminus: Type II secretion system protein L (399 aa).

The Cytoplasmic portion of the chain corresponds to 1–247 (MSKAENTSGK…VKPWKQALLP (247 aa)). The chain crosses the membrane as a helical span at residues 248 to 264 (WRNVLIALSAWLLLVLG). Over 265 to 399 (ESVWTHYQWY…EGQLTLRSQP (135 aa)) the chain is Periplasmic.

The protein belongs to the GSP L family. Type II secretion system is composed of four main components: the outer membrane complex, the inner membrane complex, the cytoplasmic secretion ATPase and the periplasm-spanning pseudopilus. Forms homodimers. Interacts with OutM/GspM. Interacts with OutE/GspE and OutF/GspF.

The protein resides in the cell inner membrane. Its function is as follows. Inner membrane component of the type II secretion system required for the energy-dependent secretion of extracellular factors such as proteases and toxins from the periplasm. Plays a role in the complex assembly and recruits OutM resulting in a stable complex in the inner membrane. Provides thus a link between the energy-providing OutE protein in the cytoplasm and the rest of the T2SS machinery. This is Type II secretion system protein L (outL) from Dickeya chrysanthemi (Pectobacterium chrysanthemi).